The chain runs to 272 residues: Phosphoribosylformylglycinamidine synthase subunit PurQ (272 aa).

Residues 8–272 (VLVMSGYGIN…FKNAVEYFNK (265 aa)) enclose the Glutamine amidotransferase type-1 domain. The active-site Nucleophile is the cysteine 98. Residues histidine 225, glutamate 227, and glutamate 235 contribute to the active site.

Part of the FGAM synthase complex composed of 1 PurL, 1 PurQ and 2 PurS subunits.

It localises to the cytoplasm. It carries out the reaction N(2)-formyl-N(1)-(5-phospho-beta-D-ribosyl)glycinamide + L-glutamine + ATP + H2O = 2-formamido-N(1)-(5-O-phospho-beta-D-ribosyl)acetamidine + L-glutamate + ADP + phosphate + H(+). The catalysed reaction is L-glutamine + H2O = L-glutamate + NH4(+). It functions in the pathway purine metabolism; IMP biosynthesis via de novo pathway; 5-amino-1-(5-phospho-D-ribosyl)imidazole from N(2)-formyl-N(1)-(5-phospho-D-ribosyl)glycinamide: step 1/2. Part of the phosphoribosylformylglycinamidine synthase complex involved in the purines biosynthetic pathway. Catalyzes the ATP-dependent conversion of formylglycinamide ribonucleotide (FGAR) and glutamine to yield formylglycinamidine ribonucleotide (FGAM) and glutamate. The FGAM synthase complex is composed of three subunits. PurQ produces an ammonia molecule by converting glutamine to glutamate. PurL transfers the ammonia molecule to FGAR to form FGAM in an ATP-dependent manner. PurS interacts with PurQ and PurL and is thought to assist in the transfer of the ammonia molecule from PurQ to PurL. The sequence is that of Phosphoribosylformylglycinamidine synthase subunit PurQ from Methanococcus maripaludis (strain DSM 14266 / JCM 13030 / NBRC 101832 / S2 / LL).